Reading from the N-terminus, the 265-residue chain is Expansin-like A1 (265 aa).

Positions 1 to 20 are cleaved as a signal peptide; that stretch reads MGSFLFLIVVIFLFSSSVNA. In terms of domain architecture, Expansin-like EG45 spans 41-147; sequence SGACAYGSMA…QRVPCDYGNK (107 aa). The chain crosses the membrane as a helical span at residues 42–62; sequence GACAYGSMATSFFAGHIAAAI. 2 N-linked (GlcNAc...) asparagine glycosylation sites follow: asparagine 99 and asparagine 102. The Expansin-like CBD domain maps to 161-244; that stretch reads NYLEIKLLYQ…NWEAGKIYDA (84 aa).

Belongs to the expansin family. Expansin-like A subfamily.

The protein localises to the membrane. This chain is Expansin-like A1 (EXLA1), found in Arabidopsis thaliana (Mouse-ear cress).